The primary structure comprises 441 residues: Ribulose bisphosphate carboxylase large chain (441 aa).

Lys5 is subject to N6,N6,N6-trimethyllysine. The substrate site is built by Asn114 and Thr164. Catalysis depends on Lys166, which acts as the Proton acceptor. Residue Lys168 participates in substrate binding. Mg(2+)-binding residues include Lys192, Asp194, and Glu195. N6-carboxylysine is present on Lys192. His285 functions as the Proton acceptor in the catalytic mechanism. Residues Arg286, His318, and Ser370 each contribute to the substrate site.

It belongs to the RuBisCO large chain family. Type I subfamily. As to quaternary structure, heterohexadecamer of 8 large chains and 8 small chains; disulfide-linked. The disulfide link is formed within the large subunit homodimers. Requires Mg(2+) as cofactor. The disulfide bond which can form in the large chain dimeric partners within the hexadecamer appears to be associated with oxidative stress and protein turnover.

Its subcellular location is the plastid. The protein localises to the chloroplast. The catalysed reaction is 2 (2R)-3-phosphoglycerate + 2 H(+) = D-ribulose 1,5-bisphosphate + CO2 + H2O. The enzyme catalyses D-ribulose 1,5-bisphosphate + O2 = 2-phosphoglycolate + (2R)-3-phosphoglycerate + 2 H(+). Its function is as follows. RuBisCO catalyzes two reactions: the carboxylation of D-ribulose 1,5-bisphosphate, the primary event in carbon dioxide fixation, as well as the oxidative fragmentation of the pentose substrate in the photorespiration process. Both reactions occur simultaneously and in competition at the same active site. In Glycyrrhiza echinata (Licorice), this protein is Ribulose bisphosphate carboxylase large chain.